Reading from the N-terminus, the 449-residue chain is Interferon-related developmental regulator 1 (449 aa).

Residues 1–10 (MPKNKKRNAP) are compositionally biased toward basic residues. The tract at residues 1 to 41 (MPKNKKRNAPHRGGGGGGGSGAATSAATTGGPHRTVQPFSD) is disordered. The segment covering 12-21 (RGGGGGGGSG) has biased composition (gly residues). Residues 22–31 (AATSAATTGG) are compositionally biased toward low complexity.

It belongs to the IFRD family. Interacts with PSIP1/LEDGF. As to expression, expressed at high levels in the embryonic brain in the period related to neuroblast proliferation and differentiation.

It localises to the cytoplasm. It is found in the cell membrane. Its subcellular location is the nucleus. Probably participates in neurogenesis. Could play a role in regulating gene activity in the proliferative and/or differentiative pathways induced by NGF. The chain is Interferon-related developmental regulator 1 (Ifrd1) from Rattus norvegicus (Rat).